The chain runs to 1061 residues: Ribonuclease E (1061 aa).

The S1 motif domain occupies alanine 39–phenylalanine 119. The tract at residues phenylalanine 57–lysine 112 is interaction with RNA. Residues arginine 169 to threonine 170 are interaction with RNA 5'-terminal monophosphate. Mg(2+) is bound by residues aspartate 303 and aspartate 346. Cysteine 404 and cysteine 407 together coordinate Zn(2+). The tract at residues cysteine 404 to cysteine 407 is required for zinc-mediated homotetramerization and catalytic activity. Disordered regions lie at residues phenylalanine 532–proline 565, glutamate 586–tyrosine 731, and glutamate 752–threonine 822. The segment covering aspartate 536–proline 546 has biased composition (pro residues). The segment covering alanine 547 to proline 565 has biased composition (low complexity). Composition is skewed to basic and acidic residues over residues alanine 598–arginine 608, asparagine 615–arginine 640, and glutamate 652–alanine 690. Positions arginine 796 to arginine 814 are enriched in basic residues. The tract at residues alanine 833–arginine 850 is interaction with enolase. Positions glutamate 1021–glutamate 1061 are interaction with PNPase. Residues proline 1031–glutamate 1061 form a disordered region. The segment covering glycine 1043–alanine 1055 has biased composition (low complexity).

It belongs to the RNase E/G family. RNase E subfamily. In terms of assembly, component of the RNA degradosome, which is a multiprotein complex involved in RNA processing and mRNA degradation. Within the RNA degradosome, RNase E assembles into a homotetramer formed by a dimer of dimers. Tetramerization is essential for catalytic activity, but not for RNA-binding. Interacts with RhlB, PNPase (pnp) and enolase (eno). Interacts with DeaD at reduced temperature. Zn(2+) serves as cofactor. The cofactor is Mg(2+).

The protein resides in the cytoplasm. The protein localises to the cell inner membrane. It carries out the reaction Endonucleolytic cleavage of single-stranded RNA in A- and U-rich regions.. The presence of a 5'-monophosphate on substrate RNA accelerates its cleavage by catalytically activating the enzyme. Binding to the membrane stabilizes protein structure and increases affinity for the substrate. Functionally, endoribonuclease that plays a central role in RNA processing and decay. Required for the maturation of 5S and 16S rRNAs and the majority of tRNAs. Also involved in the degradation of most mRNAs. Can also process other RNA species, such as RNAI, a molecule that controls the replication of ColE1 plasmid, and the cell division inhibitor DicF-RNA. It initiates the decay of RNAs by cutting them internally near their 5'-end. It is able to remove poly(A) tails by an endonucleolytic process. Required to initiate rRNA degradation during both starvation and quality control; acts after RNase PH (rph) exonucleolytically digests the 3'-end of the 16S rRNA. Degradation of 16S rRNA leads to 23S rRNA degradation. Processes the 3 tRNA(Pro) precursors immediately after the 3'-CCA to generate the mature ends. Prefers 5'-monophosphorylated substrates over 5'-triphosphorylated substrates. 5'-monophosphate-assisted cleavage requires at least 2 and preferably 3 or more unpaired 5'-terminal nucleotides. The optimal spacing between the 5' end and the scissile phosphate appears to be 8 nucleotides. Any sequence of unpaired nucleotides at the 5'-end is tolerated. The polypeptide is Ribonuclease E (Escherichia coli (strain K12)).